Consider the following 323-residue polypeptide: DNA primase small subunit PriS (323 aa).

Active-site residues include Asp-97, Asp-99, and Asp-274.

It belongs to the eukaryotic-type primase small subunit family. In terms of assembly, heterodimer of a small subunit (PriS) and a large subunit (PriL). The cofactor is Mg(2+). Mn(2+) is required as a cofactor.

Its function is as follows. Catalytic subunit of DNA primase, an RNA polymerase that catalyzes the synthesis of short RNA molecules used as primers for DNA polymerase during DNA replication. The small subunit contains the primase catalytic core and has DNA synthesis activity on its own. Binding to the large subunit stabilizes and modulates the activity, increasing the rate of DNA synthesis while decreasing the length of the DNA fragments, and conferring RNA synthesis capability. The DNA polymerase activity may enable DNA primase to also catalyze primer extension after primer synthesis. May also play a role in DNA repair. The protein is DNA primase small subunit PriS of Methanothermobacter thermautotrophicus (strain ATCC 29096 / DSM 1053 / JCM 10044 / NBRC 100330 / Delta H) (Methanobacterium thermoautotrophicum).